A 113-amino-acid polypeptide reads, in one-letter code: Nucleoid-associated protein P9303_00241 (113 aa).

A disordered region spans residues 90–113; the sequence is TTTMKEQMEELTGGLNLNLPGMSD.

The protein belongs to the YbaB/EbfC family. Homodimer.

Its subcellular location is the cytoplasm. The protein resides in the nucleoid. Binds to DNA and alters its conformation. May be involved in regulation of gene expression, nucleoid organization and DNA protection. The polypeptide is Nucleoid-associated protein P9303_00241 (Prochlorococcus marinus (strain MIT 9303)).